Reading from the N-terminus, the 144-residue chain is Granulocyte-macrophage colony-stimulating factor (144 aa).

Positions 1–17 (MWLQSLLLLGTVACSIS) are cleaved as a signal peptide. O-linked (GalNAc...) serine glycans are attached at residues Ser22, Ser24, and Ser26. Thr27 is a glycosylation site (O-linked (GalNAc...) threonine; partial). 2 N-linked (GlcNAc...) asparagine glycosylation sites follow: Asn44 and Asn54. Intrachain disulfides connect Cys71–Cys113 and Cys105–Cys138.

It belongs to the GM-CSF family. In terms of assembly, monomer. The signaling GM-CSF receptor complex is a dodecamer of two head-to-head hexamers of two alpha, two beta, and two ligand subunits.

It localises to the secreted. Cytokine that stimulates the growth and differentiation of hematopoietic precursor cells from various lineages, including granulocytes, macrophages, eosinophils and erythrocytes. This Homo sapiens (Human) protein is Granulocyte-macrophage colony-stimulating factor (CSF2).